A 234-amino-acid polypeptide reads, in one-letter code: Leucyl/phenylalanyl-tRNA--protein transferase (234 aa).

This sequence belongs to the L/F-transferase family.

Its subcellular location is the cytoplasm. The enzyme catalyses N-terminal L-lysyl-[protein] + L-leucyl-tRNA(Leu) = N-terminal L-leucyl-L-lysyl-[protein] + tRNA(Leu) + H(+). It carries out the reaction N-terminal L-arginyl-[protein] + L-leucyl-tRNA(Leu) = N-terminal L-leucyl-L-arginyl-[protein] + tRNA(Leu) + H(+). The catalysed reaction is L-phenylalanyl-tRNA(Phe) + an N-terminal L-alpha-aminoacyl-[protein] = an N-terminal L-phenylalanyl-L-alpha-aminoacyl-[protein] + tRNA(Phe). Its function is as follows. Functions in the N-end rule pathway of protein degradation where it conjugates Leu, Phe and, less efficiently, Met from aminoacyl-tRNAs to the N-termini of proteins containing an N-terminal arginine or lysine. This chain is Leucyl/phenylalanyl-tRNA--protein transferase, found in Tolumonas auensis (strain DSM 9187 / NBRC 110442 / TA 4).